The sequence spans 239 residues: MTVEWLAEQLKEHNIELTETQKQQFQTYYRLLVEWNEKMNLTSITDEHDVYLKHFYDSIAPSFYFDFNQPISICDVGAGAGFPSIPLKIMFPQLKVTIVDSLNKRIQFLNHLASELQLQDVSFIHDRAETFGKGVYRESYDVVTARAVARLSVLSELCLPLIKKGGQFVALKSSKGEEELEEAKFAISVLGGNVTETHTFKLPEDAGERQMFIIDKKRQTPKKYPRKPGTPNKTPLLEK.

Residues Gly77, Phe82, 128–129 (AE), and Arg146 contribute to the S-adenosyl-L-methionine site. The interval 214–239 (IDKKRQTPKKYPRKPGTPNKTPLLEK) is disordered.

This sequence belongs to the methyltransferase superfamily. RNA methyltransferase RsmG family.

It localises to the cytoplasm. Its function is as follows. Specifically methylates the N7 position of guanine in position 535 of 16S rRNA. In Staphylococcus aureus (strain Mu3 / ATCC 700698), this protein is Ribosomal RNA small subunit methyltransferase G.